We begin with the raw amino-acid sequence, 224 residues long: MAGQISPTRSALLASKASLKTASGGADLLKRKRDALIGEFFALVKDALAAREQLGGVSKGAYTSLFGAKAWDSPEAVESLSLAGSGDYAVNMQIESIYGVKVPRINIPERTQTTNFSPINVGARTIQAATDFGGVMEAIVKVAATETKLRRIGEEIKKTSRRVNALEQVVIPGIEDDIRFIRSVLDQREREASYTQKKIKAKIEAKAKQQRKDIQSGNHGSAAD.

Residues 205-214 show a composition bias toward basic and acidic residues; it reads AKAKQQRKDI. Residues 205–224 form a disordered region; sequence AKAKQQRKDIQSGNHGSAAD. A compositionally biased stretch (polar residues) spans 215–224; that stretch reads QSGNHGSAAD.

Belongs to the V-ATPase D subunit family.

In terms of biological role, produces ATP from ADP in the presence of a proton gradient across the membrane. This Deinococcus deserti (strain DSM 17065 / CIP 109153 / LMG 22923 / VCD115) protein is V-type ATP synthase subunit D.